A 514-amino-acid polypeptide reads, in one-letter code: Lysine--tRNA ligase (514 aa).

Mg(2+) is bound by residues Glu-422 and Glu-429.

The protein belongs to the class-II aminoacyl-tRNA synthetase family. In terms of assembly, homodimer. It depends on Mg(2+) as a cofactor.

Its subcellular location is the cytoplasm. It carries out the reaction tRNA(Lys) + L-lysine + ATP = L-lysyl-tRNA(Lys) + AMP + diphosphate. The polypeptide is Lysine--tRNA ligase (Psychrobacter arcticus (strain DSM 17307 / VKM B-2377 / 273-4)).